The chain runs to 334 residues: tRNA-cytidine(32) 2-sulfurtransferase (334 aa).

Positions 74 to 79 (SGGKDS) match the PP-loop motif motif. Residues C149, C152, and C240 each contribute to the [4Fe-4S] cluster site.

It belongs to the TtcA family. In terms of assembly, homodimer. The cofactor is Mg(2+). [4Fe-4S] cluster serves as cofactor.

It is found in the cytoplasm. It catalyses the reaction cytidine(32) in tRNA + S-sulfanyl-L-cysteinyl-[cysteine desulfurase] + AH2 + ATP = 2-thiocytidine(32) in tRNA + L-cysteinyl-[cysteine desulfurase] + A + AMP + diphosphate + H(+). Its pathway is tRNA modification. Its function is as follows. Catalyzes the ATP-dependent 2-thiolation of cytidine in position 32 of tRNA, to form 2-thiocytidine (s(2)C32). The sulfur atoms are provided by the cysteine/cysteine desulfurase (IscS) system. The protein is tRNA-cytidine(32) 2-sulfurtransferase of Burkholderia ambifaria (strain ATCC BAA-244 / DSM 16087 / CCUG 44356 / LMG 19182 / AMMD) (Burkholderia cepacia (strain AMMD)).